Here is a 148-residue protein sequence, read N- to C-terminus: Probable calcium-binding protein CML14 (148 aa).

EF-hand domains follow at residues 9 to 44 (DQVSSMKEAFMLFDTDGDGKIAPSELGILMRSLGGN), 80 to 115 (PFDRQLRDAFKVLDKEGTGFVAVADLRHILTSIGEK), and 116 to 148 (LQPSEFDEWIKEVDVGSDGKIRYEDFIARMVAK). Ca(2+)-binding residues include aspartate 22, aspartate 24, aspartate 26, lysine 28, and glutamate 33.

Its function is as follows. Potential calcium sensor. The sequence is that of Probable calcium-binding protein CML14 (CML14) from Arabidopsis thaliana (Mouse-ear cress).